Here is a 766-residue protein sequence, read N- to C-terminus: BMP/retinoic acid-inducible neural-specific protein 3 (766 aa).

The first 33 residues, 1-33, serve as a signal peptide directing secretion; it reads MIWRSRAGAELFSLMALWEWIALSLHCWVLAVA. Residues 74 to 264 enclose the MACPF domain; that stretch reads RYKIYREFGR…FVQAALSYIA (191 aa). Asparagine 168, asparagine 337, asparagine 456, asparagine 562, asparagine 609, and asparagine 641 each carry an N-linked (GlcNAc...) asparagine glycan.

Belongs to the BRINP family. In terms of tissue distribution, strongly expressed in oral keratinocytes compared to the weak expression in tongue squamous cell carcinoma (SCC). Expressed in endothelial and aortic smooth muscle cells. Overexpressed in gonadotropinomas compared to normal pituitarie tissues.

The protein localises to the secreted. The protein resides in the mitochondrion. Its function is as follows. Inhibits neuronal cell proliferation by negative regulation of the cell cycle transition. Promotes pituitary gonadotrope cell proliferation, migration and invasion, when overexpressed. May play a role in cell pituitary tumor development. This chain is BMP/retinoic acid-inducible neural-specific protein 3 (BRINP3), found in Homo sapiens (Human).